Here is a 468-residue protein sequence, read N- to C-terminus: E3 ubiquitin-protein ligase RGLG2 (468 aa).

The interval 1 to 89 (MGTGNSKENW…PSQSYGSDNK (89 aa)) is disordered. Gly-2 carries the N-myristoyl glycine lipid modification. Residues 12–45 (QSSFRSTSASSASPSSSSWASQQSYPQYGAESYN) are compositionally biased toward low complexity. Over residues 46–65 (YPPPPSYAQPPEYTQPPPPL) the composition is skewed to pro residues. Residues 66–84 (YSTQPYSAPSYSAPPSQSY) show a composition bias toward low complexity. The VWFA domain occupies 122 to 342 (NLIVGIDFTK…KETEFALSAL (221 aa)). The interval 369-416 (FPLPPPMRGGSSSYNSPKPSRLPSFKPSVPPHPTEGYHVRSSPVPPPT) is disordered. The RING-type zinc-finger motif lies at 425–458 (CPICLSNPKDMAFGCGHQTCCECGPDLQMCPICR).

Interacts with the heterodimer UBC35/UEV1B, UBC35 alone, PIN1, but not with UCB2, UCB9, UEV1B or UEV1C alone. Interacts with ERF053. N-myristoylated. As to expression, ubiquitously expressed.

The protein resides in the cell membrane. It localises to the nucleus. The enzyme catalyses S-ubiquitinyl-[E2 ubiquitin-conjugating enzyme]-L-cysteine + [acceptor protein]-L-lysine = [E2 ubiquitin-conjugating enzyme]-L-cysteine + N(6)-ubiquitinyl-[acceptor protein]-L-lysine.. E3 ubiquitin-protein ligase that mediates the formation of 'Lys-63'-linked ubiquitin chains. Regulates apical dominance by acting on the auxin transport proteins abundance. Mediates ubiquitination and subsequent proteasomal degradation of ERF053 in response to drought stress. Acts as a negative regulator of drought stress response. The sequence is that of E3 ubiquitin-protein ligase RGLG2 from Arabidopsis thaliana (Mouse-ear cress).